A 315-amino-acid polypeptide reads, in one-letter code: Ribonuclease Z (315 aa).

His-61, His-63, Asp-65, His-66, His-151, Asp-219, and His-278 together coordinate Zn(2+). Asp-65 functions as the Proton acceptor in the catalytic mechanism.

This sequence belongs to the RNase Z family. As to quaternary structure, homodimer. Zn(2+) serves as cofactor.

It catalyses the reaction Endonucleolytic cleavage of RNA, removing extra 3' nucleotides from tRNA precursor, generating 3' termini of tRNAs. A 3'-hydroxy group is left at the tRNA terminus and a 5'-phosphoryl group is left at the trailer molecule.. Its function is as follows. Zinc phosphodiesterase, which displays some tRNA 3'-processing endonuclease activity. Probably involved in tRNA maturation, by removing a 3'-trailer from precursor tRNA. This is Ribonuclease Z from Clostridium botulinum (strain Eklund 17B / Type B).